Consider the following 457-residue polypeptide: Paired box protein Pax-8 (457 aa).

The paired DNA-binding region spans 9–135; the sequence is GHGGLNQLGG…SSINRIIRTK (127 aa). A PAI subdomain region spans residues 12-68; sequence GLNQLGGAFVNGRPLPEVVRQRIVDLAHQGVRPCDISRQLRVSHGCVSKILGRYYET. The RED subdomain stretch occupies residues 87 to 135; that stretch reads KVVEKIGDYKRQNPTMFAWEIRDRLLAEGVCDNDTVPSVSSINRIIRTK. The segment covering 159 to 182 has biased composition (polar residues); sequence LIPSSAVTPPESPQSDSLGSTYSI. The segment at 159–224 is disordered; sequence LIPSSAVTPP…SSSSGPRKHL (66 aa). Residue Ser-304 is modified to Phosphoserine.

As to quaternary structure, interacts with WWTR1. In terms of tissue distribution, expressed in the developing excretory system and the thyroid gland.

The protein localises to the nucleus. In terms of biological role, thought to encode a transcription factor. It may have a role in kidney cell differentiation. May play a regulatory role in mammalian development. In Mus musculus (Mouse), this protein is Paired box protein Pax-8 (Pax8).